Here is a 48-residue protein sequence, read N- to C-terminus: uncharacterized protein (48 aa).

Belongs to the ELIP/psbS family.

The protein resides in the plastid. It is found in the chloroplast. Functionally, possible role in chlorophyll and/or carotenoid binding. This is an uncharacterized protein from Porphyra purpurea (Red seaweed).